The chain runs to 844 residues: DNA mismatch repair protein MutS (844 aa).

Residue 602–609 (GPNMSGKS) coordinates ATP.

The protein belongs to the DNA mismatch repair MutS family.

In terms of biological role, this protein is involved in the repair of mismatches in DNA. It is possible that it carries out the mismatch recognition step. This protein has a weak ATPase activity. This Streptococcus pneumoniae (strain ATCC 700669 / Spain 23F-1) protein is DNA mismatch repair protein MutS.